A 165-amino-acid chain; its full sequence is Pro-MCH (165 aa).

The N-terminal stretch at 1–21 (MAKMNLSSYILILTFSLFSQG) is a signal peptide. The residue at position 143 (Ile-143) is an Isoleucine amide. An intrachain disulfide couples Cys-153 to Cys-162.

This sequence belongs to the melanin-concentrating hormone family. In terms of processing, differentially processed in the brain and in peripheral organs producing two neuropeptides; NEI and MCH. A third peptide, NGE, may also be produced. Preferential processing in neurons by prohormone convertase 2 (PC2) generates NEI. MCH is generated in neurons of the lateral hypothalmic area by several prohormone convertases including PC1/3, PC2 and PC5/6. Predominantly expressed in lateral hypothalamus, also detected in pallidum, neocortex and cerebellum. Also found in thymus, brown adipose tissue, duodenum and testis (spermatogonia, early spermatocytes and Sertoli cells). No expression in peripheral blood. In brain exclusively mature MCH and NEI peptides are present. In peripheral tissues a large product, encompassing the NEI and MCH domains of the precursor, is found predominantly.

The protein localises to the secreted. In terms of biological role, MCH may act as a neurotransmitter or neuromodulator in a broad array of neuronal functions directed toward the regulation of goal-directed behavior, such as food intake, and general arousal. May also have a role in spermatocyte differentiation. In Homo sapiens (Human), this protein is Pro-MCH (PMCH).